A 174-amino-acid polypeptide reads, in one-letter code: Inactive signal peptidase IA (174 aa).

The Cytoplasmic segment spans residues 1–7 (MKKVVKY). A helical membrane pass occupies residues 8–28 (LISLILAIIIVLFVQTFVIVG). The Extracellular segment spans residues 29-174 (HVIPNNDMSP…FSKWTVQFKS (146 aa)).

This sequence belongs to the peptidase S26 family.

Its subcellular location is the cell membrane. In terms of biological role, catalytically inactive. This chain is Inactive signal peptidase IA (spsA), found in Staphylococcus aureus (strain COL).